The chain runs to 514 residues: 2-isopropylmalate synthase (514 aa).

Residues 5-268 (LIIFDTTLRD…DVGIDTSQIV (264 aa)) form the Pyruvate carboxyltransferase domain. Residues D14, H202, H204, and N239 each contribute to the Mn(2+) site. The interval 395 to 514 (KFVSLSQHSE…KDDKVNPQRS (120 aa)) is regulatory domain.

It belongs to the alpha-IPM synthase/homocitrate synthase family. LeuA type 1 subfamily. As to quaternary structure, homodimer. It depends on Mn(2+) as a cofactor.

It localises to the cytoplasm. It catalyses the reaction 3-methyl-2-oxobutanoate + acetyl-CoA + H2O = (2S)-2-isopropylmalate + CoA + H(+). The protein operates within amino-acid biosynthesis; L-leucine biosynthesis; L-leucine from 3-methyl-2-oxobutanoate: step 1/4. Functionally, catalyzes the condensation of the acetyl group of acetyl-CoA with 3-methyl-2-oxobutanoate (2-ketoisovalerate) to form 3-carboxy-3-hydroxy-4-methylpentanoate (2-isopropylmalate). The protein is 2-isopropylmalate synthase of Burkholderia lata (strain ATCC 17760 / DSM 23089 / LMG 22485 / NCIMB 9086 / R18194 / 383).